The following is a 155-amino-acid chain: Protein-export protein SecB (155 aa).

The protein belongs to the SecB family. Homotetramer, a dimer of dimers. One homotetramer interacts with 1 SecA dimer.

The protein localises to the cytoplasm. Functionally, one of the proteins required for the normal export of preproteins out of the cell cytoplasm. It is a molecular chaperone that binds to a subset of precursor proteins, maintaining them in a translocation-competent state. It also specifically binds to its receptor SecA. The protein is Protein-export protein SecB of Paramagnetospirillum magneticum (strain ATCC 700264 / AMB-1) (Magnetospirillum magneticum).